A 524-amino-acid chain; its full sequence is Probable myosin-binding protein 5 (524 aa).

A helical transmembrane segment spans residues 20–40; the sequence is FLIYALLEWILIIILFIDGFL. Residues 299-397 form the GTD-binding domain; that stretch reads SILQHLNRQV…ELEAGIEVYR (99 aa). Residues 462–490 are a coiled coil; the sequence is SRKDMLVKEISEITERLNAIESKGELLQQ.

It localises to the membrane. Its function is as follows. Probable membrane-anchored myosin receptors. This is Probable myosin-binding protein 5 from Arabidopsis thaliana (Mouse-ear cress).